A 506-amino-acid chain; its full sequence is Maturase K (506 aa).

It belongs to the intron maturase 2 family. MatK subfamily.

It is found in the plastid. Its subcellular location is the chloroplast. In terms of biological role, usually encoded in the trnK tRNA gene intron. Probably assists in splicing its own and other chloroplast group II introns. The sequence is that of Maturase K from Jurinea cyanoides.